The chain runs to 293 residues: tRNA (guanine(9)-N1)-methyltransferase (293 aa).

A disordered region spans residues 1–31 (MSNDEINQNEEKVKRTPPLPPVPEGMSKKQW). Phosphothreonine is present on threonine 16. Residues 32 to 61 (KKMCKRQRWEENKAKYNAERRVKKKRLRHE) adopt a coiled-coil conformation. The 197-residue stretch at 83–279 (EPRINVNQTD…SVLPPRKLDA (197 aa)) folds into the SAM-dependent MTase TRM10-type domain. Residues 186-187 (LT), glycine 206, 210-214 (DKNRY), cysteine 218, leucine 232, and 244-246 (RVL) contribute to the S-adenosyl-L-methionine site. The active-site Proton acceptor is the aspartate 210. Serine 283 carries the post-translational modification Phosphoserine.

Belongs to the class IV-like SAM-binding methyltransferase superfamily. TRM10 family. In terms of assembly, monomer.

The protein resides in the cytoplasm. It localises to the nucleus. The catalysed reaction is guanosine(9) in tRNA + S-adenosyl-L-methionine = N(1)-methylguanosine(9) in tRNA + S-adenosyl-L-homocysteine + H(+). Functionally, S-adenosyl-L-methionine-dependent guanine N(1)-methyltransferase that catalyzes the formation of N(1)-methylguanine at position 9 (m1G9) in cytoplasmic tRNAs. This is tRNA (guanine(9)-N1)-methyltransferase from Saccharomyces cerevisiae (strain ATCC 204508 / S288c) (Baker's yeast).